We begin with the raw amino-acid sequence, 363 residues long: tRNA(Met) cytidine acetate ligase (363 aa).

ATP contacts are provided by residues 7–20 (IAEF…HKYL), glycine 96, asparagine 152, and arginine 175.

The protein belongs to the TmcAL family.

It is found in the cytoplasm. The enzyme catalyses cytidine(34) in elongator tRNA(Met) + acetate + ATP = N(4)-acetylcytidine(34) in elongator tRNA(Met) + AMP + diphosphate. Its function is as follows. Catalyzes the formation of N(4)-acetylcytidine (ac(4)C) at the wobble position of elongator tRNA(Met), using acetate and ATP as substrates. First activates an acetate ion to form acetyladenylate (Ac-AMP) and then transfers the acetyl group to tRNA to form ac(4)C34. The protein is tRNA(Met) cytidine acetate ligase of Streptococcus thermophilus (strain ATCC BAA-491 / LMD-9).